A 296-amino-acid chain; its full sequence is Glycine N-acyltransferase (296 aa).

K16 carries the post-translational modification N6-acetyllysine; alternate. K16 bears the N6-succinyllysine; alternate mark. At K113 the chain carries N6-acetyllysine. An N6-acetyllysine; alternate mark is found at K127 and K142. K127 and K142 each carry N6-succinyllysine; alternate. The residue at position 159 (K159) is an N6-acetyllysine. An N6-succinyllysine modification is found at K169. An N6-acetyllysine; alternate mark is found at K183 and K256. N6-succinyllysine; alternate occurs at positions 183 and 256. K267 is modified (N6-succinyllysine).

Belongs to the glycine N-acyltransferase family.

The protein localises to the mitochondrion. It carries out the reaction an acyl-CoA + glycine = an N-acylglycine + CoA + H(+). The catalysed reaction is benzoyl-CoA + glycine = N-benzoylglycine + CoA + H(+). In terms of biological role, mitochondrial acyltransferase which transfers an acyl group to the N-terminus of glycine and glutamine, although much less efficiently. Can conjugate a multitude of substrates to form a variety of N-acylglycines, thereby detoxify xenobiotics, such as benzoic acid or salicylic acid, and endogenous organic acids, such as isovaleric acid. The sequence is that of Glycine N-acyltransferase (Glyat) from Rattus norvegicus (Rat).